The primary structure comprises 95 residues: Co-chaperonin GroES (95 aa).

This sequence belongs to the GroES chaperonin family. As to quaternary structure, heptamer of 7 subunits arranged in a ring. Interacts with the chaperonin GroEL.

It is found in the cytoplasm. Its function is as follows. Together with the chaperonin GroEL, plays an essential role in assisting protein folding. The GroEL-GroES system forms a nano-cage that allows encapsulation of the non-native substrate proteins and provides a physical environment optimized to promote and accelerate protein folding. GroES binds to the apical surface of the GroEL ring, thereby capping the opening of the GroEL channel. This is Co-chaperonin GroES from Rickettsia bellii (strain RML369-C).